Here is a 177-residue protein sequence, read N- to C-terminus: Adenine phosphoribosyltransferase (177 aa).

It belongs to the purine/pyrimidine phosphoribosyltransferase family. In terms of assembly, homodimer.

Its subcellular location is the cytoplasm. It carries out the reaction AMP + diphosphate = 5-phospho-alpha-D-ribose 1-diphosphate + adenine. It functions in the pathway purine metabolism; AMP biosynthesis via salvage pathway; AMP from adenine: step 1/1. Functionally, catalyzes a salvage reaction resulting in the formation of AMP, that is energically less costly than de novo synthesis. In Leuconostoc citreum (strain KM20), this protein is Adenine phosphoribosyltransferase.